The chain runs to 37 residues: Large ribosomal subunit protein bL36 (37 aa).

This sequence belongs to the bacterial ribosomal protein bL36 family.

The chain is Large ribosomal subunit protein bL36 from Acidithiobacillus ferrooxidans (strain ATCC 23270 / DSM 14882 / CIP 104768 / NCIMB 8455) (Ferrobacillus ferrooxidans (strain ATCC 23270)).